Reading from the N-terminus, the 109-residue chain is Small serum protein 2 (109 aa).

The signal sequence occupies residues 1-19 (MRVFFSLIIFSFMLATCQG). 5 cysteine pairs are disulfide-bonded: C21–C72, C39–C64, C59–C93, C62–C71, and C84–C107.

In terms of assembly, forms a stable, non-covalent complex with serotriflin.

It localises to the secreted. In terms of biological role, may serve as a self-defense protein against the toxic effects of the snake venom during accidental envenomation. Does not show inhibitory activity towards brevilysin H6. The polypeptide is Small serum protein 2 (Protobothrops flavoviridis (Habu)).